Reading from the N-terminus, the 294-residue chain is Large ribosomal subunit protein uL18A (294 aa).

S10 carries the post-translational modification Phosphoserine. Phosphotyrosine is present on Y12. Phosphoserine is present on S81.

Belongs to the universal ribosomal protein uL18 family. As to quaternary structure, component of the large ribosomal subunit (LSU). Mature yeast ribosomes consist of a small (40S) and a large (60S) subunit. The 40S small subunit contains 1 molecule of ribosomal RNA (18S rRNA) and 33 different proteins (encoded by 57 genes). The large 60S subunit contains 3 rRNA molecules (25S, 5.8S and 5S rRNA) and 46 different proteins (encoded by 81 genes). Component of a hexameric 5S RNP precursor complex, composed of 5S RNA, rrs1, rpf2, rpl5a/rpl5b, rpl11a/rpl11b and syo1; this complex acts as a precursor for ribosome assembly. rpl5a/rpl5b/uL18 forms a heterotrimeric complex with syo1 and rpl11a/rpl11b/uL5. Interaction of this complex with KAP104 allows the nuclear import of the heterotrimer.

It is found in the cytoplasm. The protein resides in the nucleus. Component of the ribosome, a large ribonucleoprotein complex responsible for the synthesis of proteins in the cell. The small ribosomal subunit (SSU) binds messenger RNAs (mRNAs) and translates the encoded message by selecting cognate aminoacyl-transfer RNA (tRNA) molecules. The large subunit (LSU) contains the ribosomal catalytic site termed the peptidyl transferase center (PTC), which catalyzes the formation of peptide bonds, thereby polymerizing the amino acids delivered by tRNAs into a polypeptide chain. The nascent polypeptides leave the ribosome through a tunnel in the LSU and interact with protein factors that function in enzymatic processing, targeting, and the membrane insertion of nascent chains at the exit of the ribosomal tunnel. In Schizosaccharomyces pombe (strain 972 / ATCC 24843) (Fission yeast), this protein is Large ribosomal subunit protein uL18A (rpl501).